A 377-amino-acid polypeptide reads, in one-letter code: tRNA(Met) cytidine acetate ligase (377 aa).

Residues 7–20 (ITEY…HLYH), glycine 101, asparagine 152, and arginine 179 each bind ATP.

This sequence belongs to the TmcAL family.

It localises to the cytoplasm. It catalyses the reaction cytidine(34) in elongator tRNA(Met) + acetate + ATP = N(4)-acetylcytidine(34) in elongator tRNA(Met) + AMP + diphosphate. Catalyzes the formation of N(4)-acetylcytidine (ac(4)C) at the wobble position of elongator tRNA(Met), using acetate and ATP as substrates. First activates an acetate ion to form acetyladenylate (Ac-AMP) and then transfers the acetyl group to tRNA to form ac(4)C34. In Oenococcus oeni (strain ATCC BAA-331 / PSU-1), this protein is tRNA(Met) cytidine acetate ligase.